A 75-amino-acid chain; its full sequence is Conotoxin Vc6.15 (75 aa).

A signal peptide spans 1 to 19 (MEKLTILLHVAAVLMSTQA). A propeptide spanning residues 20–41 (LIQEQRQKAKINLFSKRKPSAE) is cleaved from the precursor. 3 disulfide bridges follow: cysteine 49–cysteine 62, cysteine 55–cysteine 66, and cysteine 61–cysteine 71.

This sequence belongs to the conotoxin O2 superfamily. Expressed by the venom duct.

It is found in the secreted. Functionally, inhibits voltage-gated ion channels. This chain is Conotoxin Vc6.15, found in Conus victoriae (Queen Victoria cone).